Reading from the N-terminus, the 111-residue chain is BET1-like protein (111 aa).

The Cytoplasmic portion of the chain corresponds to Met-1 to Lys-86. Phosphoserine is present on residues Ser-9 and Ser-37. Residues Glu-15–Met-77 enclose the t-SNARE coiled-coil homology domain. A helical; Anchor for type IV membrane protein membrane pass occupies residues Leu-87–Ser-107. Residues Arg-108 to Thr-111 lie on the Lumenal side of the membrane.

Component of a SNARE complex consisting of STX5, YKT6, GOSR1 and BET1L. Interacts with STX5.

The protein localises to the golgi apparatus membrane. It is found in the golgi apparatus. Its subcellular location is the trans-Golgi network membrane. Its function is as follows. Vesicle SNARE required for targeting and fusion of retrograde transport vesicles with the Golgi complex. Required for the integrity of the Golgi complex. The chain is BET1-like protein from Homo sapiens (Human).